A 223-amino-acid polypeptide reads, in one-letter code: MNKSDALVVFSGGQDSTTCLFWAKKHFRKVYALSFIYGQKHVKEVELARVIAGKAGVEFKAMDVSFIGNLGKNSLTDTTITMDEVKPADSFPNTFVPGRNLFFLSIAAVYARELGINHIVTGVSQTDFSGYPDCRDAFIKSLNVTLNLAMDEQFVLHTPLMWIDKAETWALADELGVLDLIRHETLTCYNGVQGDGCGHCPACKLRREGLEKYLEIKAEREKR.

10 to 20 provides a ligand contact to ATP; the sequence is FSGGQDSTTCL. Zn(2+) is bound by residues Cys188, Cys197, Cys200, and Cys203.

It belongs to the QueC family. Zn(2+) is required as a cofactor.

It carries out the reaction 7-carboxy-7-deazaguanine + NH4(+) + ATP = 7-cyano-7-deazaguanine + ADP + phosphate + H2O + H(+). It functions in the pathway purine metabolism; 7-cyano-7-deazaguanine biosynthesis. Its function is as follows. Catalyzes the ATP-dependent conversion of 7-carboxy-7-deazaguanine (CDG) to 7-cyano-7-deazaguanine (preQ(0)). This chain is 7-cyano-7-deazaguanine synthase, found in Phocaeicola vulgatus (strain ATCC 8482 / DSM 1447 / JCM 5826 / CCUG 4940 / NBRC 14291 / NCTC 11154) (Bacteroides vulgatus).